Reading from the N-terminus, the 164-residue chain is MADRLTQLQTCLDQLVEQFNATVNYINTSSEPSLLDEDPTSVSNIAASAPLPANQTQQGSTLGSNRQTVSPSTQAEAESNFENTINELSTDIILKSRQISMLIDSLPGIGVSPESQLKIIDDLSKELQSVEQEQVKKIQEKDKLLKWCESLIVEVATGISETRH.

The segment at 49–81 (APLPANQTQQGSTLGSNRQTVSPSTQAEAESNF) is disordered. Positions 53–81 (ANQTQQGSTLGSNRQTVSPSTQAEAESNF) are enriched in polar residues. Residues 114–146 (ESQLKIIDDLSKELQSVEQEQVKKIQEKDKLLK) are a coiled coil.

This sequence belongs to the Mediator complex subunit 21 family. In terms of assembly, component of the Mediator complex.

It is found in the nucleus. Component of the Mediator complex, a coactivator involved in the regulated transcription of nearly all RNA polymerase II-dependent genes. Mediator functions as a bridge to convey information from gene-specific regulatory proteins to the basal RNA polymerase II transcription machinery. Mediator is recruited to promoters by direct interactions with regulatory proteins and serves as a scaffold for the assembly of a functional preinitiation complex with RNA polymerase II and the general transcription factors. The chain is Mediator of RNA polymerase II transcription subunit 21 (SRB7) from Scheffersomyces stipitis (strain ATCC 58785 / CBS 6054 / NBRC 10063 / NRRL Y-11545) (Yeast).